We begin with the raw amino-acid sequence, 357 residues long: Geranylgeranyl pyrophosphate synthase 11, chloroplastic (357 aa).

A chloroplast-targeting transit peptide spans 1–37 (MATTLSSSSLFIQFRGRRYNSLSSFNNLQKRTVLSLS). Residues Lys-103, Arg-106, and His-135 each coordinate isopentenyl diphosphate. Asp-142 and Asp-148 together coordinate Mg(2+). Residue Arg-153 participates in dimethylallyl diphosphate binding. Arg-154 contacts isopentenyl diphosphate. Dimethylallyl diphosphate-binding residues include Lys-242, Thr-243, Gln-280, Lys-297, and Lys-307.

It belongs to the FPP/GGPP synthase family. As to quaternary structure, monomer. Mg(2+) is required as a cofactor.

It is found in the plastid. It localises to the chloroplast. The catalysed reaction is isopentenyl diphosphate + dimethylallyl diphosphate = (2E)-geranyl diphosphate + diphosphate. It carries out the reaction isopentenyl diphosphate + (2E)-geranyl diphosphate = (2E,6E)-farnesyl diphosphate + diphosphate. The enzyme catalyses isopentenyl diphosphate + (2E,6E)-farnesyl diphosphate = (2E,6E,10E)-geranylgeranyl diphosphate + diphosphate. Its pathway is isoprenoid biosynthesis; farnesyl diphosphate biosynthesis; farnesyl diphosphate from geranyl diphosphate and isopentenyl diphosphate: step 1/1. It participates in isoprenoid biosynthesis; geranyl diphosphate biosynthesis; geranyl diphosphate from dimethylallyl diphosphate and isopentenyl diphosphate: step 1/1. It functions in the pathway isoprenoid biosynthesis; geranylgeranyl diphosphate biosynthesis; geranylgeranyl diphosphate from farnesyl diphosphate and isopentenyl diphosphate: step 1/1. Functionally, catalyzes the trans-addition of the three molecules of IPP onto DMAPP to form geranylgeranyl pyrophosphate. This chain is Geranylgeranyl pyrophosphate synthase 11, chloroplastic, found in Arabidopsis thaliana (Mouse-ear cress).